The primary structure comprises 360 residues: F420-dependent hydroxymycolic acid dehydrogenase (360 aa).

Positions 1–40 form a signal peptide, tat-type signal; it reads MTGISRRTFGLAAGFGAIGAGGLGGGCSTRSGPTPTPEPA. Asp77 is a coenzyme F420-(gamma-Glu)n binding site. The active-site Proton donor is His78. Coenzyme F420-(gamma-Glu)n is bound at residue 145-146; sequence TG. Glu147 (proton acceptor) is an active-site residue. Coenzyme F420-(gamma-Glu)n is bound by residues Asn150 and 213–214; that span reads SG.

Belongs to the F420-dependent hydroxymycolic acid dehydrogenase family. As to quaternary structure, homodimer. In terms of processing, is exported by the Tat system. The position of the signal peptide cleavage has not been experimentally proven. May be lipidated.

The protein localises to the cell envelope. The protein operates within lipid metabolism; mycolic acid biosynthesis. With respect to regulation, is inhibited by the anti-tuberculous drug PA-824, a bicyclic 4-nitroimidazole class compound. Therefore, this is consistent with the finding that PA-824 inhibits the formation of K-MAs and causes an accumulation of hydroxymycolic acids (H-MAs) in M.tuberculosis. Functionally, catalyzes the coenzyme F420-dependent oxidation of hydroxymycolic acids (H-MAs) to ketomycolic acids (K-MAs), a lipid class making up the mycobacterial pseudo-outer membrane and over one-third of the dry weight of M.tuberculosis. Does not exhibit F420-dependent glucose-6-phosphate dehydrogenase (FGD) activity. This chain is F420-dependent hydroxymycolic acid dehydrogenase, found in Mycobacterium tuberculosis (strain ATCC 25618 / H37Rv).